A 1749-amino-acid polypeptide reads, in one-letter code: Nucleoporin NUP188 (1749 aa).

Ala2 carries the post-translational modification N-acetylalanine. Disordered regions lie at residues 1514-1542 (VAQRVQRPPSAASAAPSSSKQPAADTEAS) and 1707-1733 (PSSPATGVLPSPQGKSTSLSKASPESQ). Residues 1521–1537 (PPSAASAAPSSSKQPAA) show a composition bias toward low complexity. Residues Ser1523 and Ser1709 each carry the phosphoserine modification. Phosphothreonine is present on Thr1712. Residue Ser1717 is modified to Phosphoserine. Positions 1719–1732 (QGKSTSLSKASPES) are enriched in polar residues.

This sequence belongs to the Nup188 family. In terms of assembly, part of the nuclear pore complex (NPC).

Its subcellular location is the nucleus. It is found in the nuclear pore complex. Functionally, component of the nuclear pore complex (NPC), a complex required for the trafficking across the nuclear envelope. Required for proper protein transport into the nucleus. This chain is Nucleoporin NUP188 (NUP188), found in Homo sapiens (Human).